The chain runs to 601 residues: MAASGDVGKLLQVQNGTPASTSYNGVDALHACNILQQLKALYDEAQLTDIVVEVDHGKTFSCHRNVLAAISPYFRSMFTSGLTESSQREVRIVGVESESMHLVLDYAYTSRVTLTESNVQALFTAASIFQIPALQDQCAQFMISRLDPQNCIGVFMFADAYGHQELRERSQDYIRKKFLCVMGEQEFLHLTKDQLVSILNSDDLNVEKEEHVYESIVHWLEYDCSRREADLPEVFAKCIRLPLLEEAFLSRIPPAFALALSRDSSDKSRLNGTNGCSQRLGMTASEMIICFDAAHKHSGKKQTVPCLDIAAGKVYKLCKPPNDLREVGILISSENDIFIAGGYRPSNSEVCIDHRAESDFWQYEHAGNRWLPRSPMLRARIGCRLVHCCGKLYALGGRVYEGDGRNALKSVECYDARDNCWTAVSPMPVAMEFHSTIEYKDRIYVLQGEYFFCFDPRKDYWGHLPSMNIPRTQGLAALHKNCIYYIAGICRNHQRTFTVEVYDIEQNTWCRKRDLPFDQATSPYIKVLLLQGRLHLFVRATQVMVEEHVFRTSRKNSLYQYDDEADHWTKVYETPDRLWDLGRHFECVVAKLYPQCLQKVL.

The BTB domain maps to 48–116 (TDIVVEVDHG…AYTSRVTLTE (69 aa)). Residues 151-253 (CIGVFMFADA…LEEAFLSRIP (103 aa)) form the BACK domain. 5 Kelch repeats span residues 336–390 (DIFI…HCCG), 391–441 (KLYA…EYKD), 443–481 (IYVL…LHKN), 482–529 (CIYY…KVLL), and 542–588 (QVMV…FECV).

This sequence belongs to the KBTBD8 family. In terms of assembly, component of the BCR(KBTBD8) E3 ubiquitin ligase complex.

Its subcellular location is the cytoplasm. The protein localises to the cytoskeleton. The protein resides in the spindle. It localises to the golgi apparatus. Substrate-specific adapter of a BCR (BTB-CUL3-RBX1) E3 ubiquitin ligase complex that acts as a regulator of neural crest specification. The BCR(KBTBD8) complex acts by mediating monoubiquitination of target proteins. This Danio rerio (Zebrafish) protein is Kelch repeat and BTB domain-containing protein 8 (kbtbd8).